The sequence spans 371 residues: Assembly protein G7 (371 aa).

Belongs to the chordopoxvirinae G7 family. In terms of assembly, part of a complex composed of A30, G7, F10 kinase, A15, D2, D3, and J1. Post-translationally, phosphorylated on serines by F10 kinase, phosphorylation state is regulated by H1 phosphatase. Undergoes proteolytic processing during morphogenesis, probably required for the transformation of immature virions (IV) into mature virions (MV).

It localises to the host cytoplasm. Its subcellular location is the virion. Functionally, late protein which is a part of a large complex required for early virion morphogenesis. This complex participates in the formation of virosomes and the incorporation of virosomal contents into nascent immature virions. The polypeptide is Assembly protein G7 (Homo sapiens (Human)).